Consider the following 233-residue polypeptide: Lysoplasmalogenase TMEM86B (233 aa).

At 1 to 30 the chain is on the cytoplasmic side; the sequence is MPCCDPYPWIGLNVGRLSSFPLLKYPQVRR. Residues 31–47 form a helical membrane-spanning segment; that stretch reads WLAPFIVACSLYFLLWI. At 48-53 the chain is on the extracellular side; sequence PEDQPS. A helical membrane pass occupies residues 54–75; it reads WVSALVKCQPILCLVLFLWAVA. Residues 76–81 are Cytoplasmic-facing; that stretch reads PGGSYT. The chain crosses the membrane as a helical span at residues 82-100; the sequence is WLLQGALTCSAVGDACLIW. Residues 101 to 106 lie on the Extracellular side of the membrane; it reads PEAFFY. Residues 107 to 124 traverse the membrane as a helical segment; that stretch reads GMAVFSVAHLLYLWAFGL. Residues 125–130 lie on the Cytoplasmic side of the membrane; that stretch reads SPLQPG. Residues 131 to 147 form a helical membrane-spanning segment; the sequence is LLLCTTLASLTYYSFLL. Residues 148–153 are Extracellular-facing; sequence LHLEPN. Residues 154–170 traverse the membrane as a helical segment; the sequence is MVLPVAAYGLILNTMLW. At 171-178 the chain is on the cytoplasmic side; that stretch reads RGLVLGRS. The helical transmembrane segment at 179 to 195 threads the bilayer; it reads AGWGAVLFIFSDGVLAW. Residues 196 to 206 lie on the Extracellular side of the membrane; that stretch reads DTFVYTLPFAR. The chain crosses the membrane as a helical span at residues 207–225; it reads LVTMSTYYAAQLLLTLSAL. At 226–233 the chain is on the cytoplasmic side; that stretch reads RSPGLKTH.

This sequence belongs to the TMEM86 family. Homodimer.

It is found in the endoplasmic reticulum membrane. It localises to the cytoplasm. It carries out the reaction a 1-O-(1Z-alkenyl)-sn-glycero-3-phosphocholine + H2O = a 2,3-saturated aldehyde + sn-glycerol 3-phosphocholine. It catalyses the reaction a 1-O-(1Z-alkenyl)-sn-glycero-3-phosphoethanolamine + H2O = a 2,3-saturated aldehyde + sn-glycero-3-phosphoethanolamine. Its activity is regulated as follows. Competitively inhibited by lysophosphatidic acid. In terms of biological role, catalyzes the hydrolysis of the vinyl ether bond of choline or ethanolamine lysoplasmalogens, forming fatty aldehyde and glycerophosphocholine or glycerophosphoethanolamine, respectively and is specific for the sn-2-deacylated (lyso) form of plasmalogen. In Rattus norvegicus (Rat), this protein is Lysoplasmalogenase TMEM86B (Tmem86b).